We begin with the raw amino-acid sequence, 370 residues long: Neutral protease 2 homolog AFUA_4G13750 (370 aa).

Residues 1–19 (MKVTILASAILALINGALA) form the signal peptide. Residues 20–172 (LPANTPTLDV…PQAIKLLDRR (153 aa)) constitute a propeptide that is removed on maturation. 2 cysteine pairs are disulfide-bonded: C178/C250 and C257/C275. H300 contributes to the Zn(2+) binding site. Residue E301 is part of the active site. Residues H304 and D315 each coordinate Zn(2+).

It belongs to the peptidase M35 family. Zn(2+) serves as cofactor.

It is found in the secreted. It carries out the reaction Preferential cleavage of bonds with hydrophobic residues in P1'. Also 3-Asn-|-Gln-4 and 8-Gly-|-Ser-9 bonds in insulin B chain.. Secreted metalloproteinase that allows assimilation of proteinaceous substrates. Shows high activities on basic nuclear substrates such as histone and protamine. May be involved in virulence. In Aspergillus fumigatus (strain ATCC MYA-4609 / CBS 101355 / FGSC A1100 / Af293) (Neosartorya fumigata), this protein is Neutral protease 2 homolog AFUA_4G13750.